A 192-amino-acid chain; its full sequence is Transmembrane protein 11, mitochondrial (192 aa).

Residues 1-20 (MAAWGRRRLGPGSSGGSARE) are disordered. 2 consecutive transmembrane segments (helical) span residues 84–100 (TAVL…LALP) and 107–124 (ISLP…LYGI).

The protein belongs to the TMEM11 family. In terms of assembly, associates with the mitochondrial contact site and cristae organizing system (MICOS) complex, composed of at least MICOS10/MIC10, CHCHD3/MIC19, CHCHD6/MIC25, APOOL/MIC27, IMMT/MIC60, APOO/MIC23/MIC26 and QIL1/MIC13. This complex was also known under the names MINOS or MitOS complex. The MICOS complex associates with mitochondrial outer membrane proteins SAMM50, MTX1, MTX2 and DNAJC11, mitochondrial inner membrane protein TMEM11 and with HSPA9. Interacts with IMMT/MIC60.

The protein localises to the mitochondrion inner membrane. Plays a role in mitochondrial morphogenesis. The polypeptide is Transmembrane protein 11, mitochondrial (TMEM11) (Homo sapiens (Human)).